The following is a 160-amino-acid chain: Cytochrome b6-f complex subunit 4 (160 aa).

Helical transmembrane passes span Leu36–Val56, Pro68–Leu88, Phe95–Glu115, and Ser131–Ile151.

Belongs to the cytochrome b family. PetD subfamily. In terms of assembly, the 4 large subunits of the cytochrome b6-f complex are cytochrome b6, subunit IV (17 kDa polypeptide, petD), cytochrome f and the Rieske protein, while the 4 small subunits are petG, petL, petM and petN. The complex functions as a dimer.

It is found in the plastid. It localises to the chloroplast thylakoid membrane. Functionally, component of the cytochrome b6-f complex, which mediates electron transfer between photosystem II (PSII) and photosystem I (PSI), cyclic electron flow around PSI, and state transitions. The sequence is that of Cytochrome b6-f complex subunit 4 from Welwitschia mirabilis (Tree tumbo).